The sequence spans 425 residues: MPLLWLRGFLLASCWIIVRSSPTPGSEGHSAAPDCPSCALATLPKDVPNSQPEMVEAVKKHILNMLHLKKRPDVTQPVPKAALLNAIRKLHVGKVGENGYVEIEDDIGRRAEMNELMEQTSEIITFAESGTARKTLHFEISQEGSDLSVVERAEIWLFLKVPKANRTRSKVTIRLFQQQKHLQGSLDAGEEAEEVGLKGEKSEMLISEKVVDARKSTWHIFPVSSCIQRLLDQGKSSLDIRIACEQCQETGASLVLLGKKKRKEEEGEGKKRDGEGGAGGDEEKEQSHRPFLMLQARQSEDHPHRRRRRGLECDGKVNICCKKQFYVSFKDIGWNDWIIAPSGYHANYCEGECPSHIAGTSGSSLSFHSTVINHYRMRGHSPFANLKSCCVPTKLRPMSMLYYDDGQNIIKKDIQNMIVEECGCS.

An N-terminal signal peptide occupies residues 1 to 20; it reads MPLLWLRGFLLASCWIIVRS. The propeptide occupies 21-309; it reads SPTPGSEGHS…EDHPHRRRRR (289 aa). Asn-165 carries N-linked (GlcNAc...) asparagine glycosylation. A disordered region spans residues 260–289; sequence KKRKEEEGEGKKRDGEGGAGGDEEKEQSHR. Residues 263-275 are compositionally biased toward basic and acidic residues; sequence KEEEGEGKKRDGE. Intrachain disulfides connect Cys-313–Cys-321, Cys-320–Cys-390, Cys-349–Cys-422, and Cys-353–Cys-424.

It belongs to the TGF-beta family. Dimeric, linked by one or more disulfide bonds. Inhibin A is a dimer of alpha/INHA and beta-A/INHBA. Activin A is a homodimer of beta-A/INHBA. Activin AB is a dimer of beta-A/INHBA and beta-B/INHBB. Interacts with FST and FSTL3; these interactions prevent activin A interaction to its type II receptor. Activin A interacts with ACVR2A. Activin A interacts with BMPR2. Inhibin A interacts with ACVR1; this interaction creates a non-signaling complex (NSC) that inhibits ACVR1-mediated BMP signaling. Inhibin A interacts with ACVR2A.

Its subcellular location is the secreted. Its function is as follows. Inhibins/activins are involved in regulating a number of diverse functions such as hypothalamic and pituitary hormone secretion, gonadal hormone secretion, germ cell development and maturation, erythroid differentiation, insulin secretion, nerve cell survival, embryonic axial development or bone growth, depending on their subunit composition. In terms of biological role, activin A is a homodimer of INHBA that plays a role in several essential biological processes including embryonic development, stem cell maintenance and differentiation, haematopoiesis, cell proliferation and tissue fibrosis. Signals through type I (such as ACVR1B or ACVR1C) and type II receptors (such as ACVR2A, ACVR2B or BMPR2) which, upon ligand binding, phosphorylate SMAD2 and SMAD3 intracellular signaling mediators that form a complex with SMAD4, translocate to the nucleus and modulate gene expression. Can also activate alternative non-canonical intracellular signaling pathways including the p38 MAPK, extracellular signal-regulated kinases 1/2 (ERK1/2) and c-Jun N-terminal kinases (JNKs) to modulate cell migration and differentiation. Alternatively, promotes osteoblastic differentiation via ACVRL1-SMAD1/5/9 pathway. In addition, can engage the type I receptor ACVR1 to form an ACVR1-activin A-type II receptor non-signaling complex (NSC) that renders receptors unavailable for engagement with BMPs, hence resulting in an apparent inhibition of ACVR1-mediated BMP signaling. Inhibin A is a dimer of alpha/INHA and beta-A/INHBA that functions as a feedback regulator in the hypothalamic-pituitary-gonadal (HPG) axis. Inhibits the secretion of FSH from the anterior pituitary gland by acting on pituitary gonadotrope cells. Antagonizes activin A by binding to the proteoglycan, betaglycan, and forming a stable complex with and, thereby, sequestering type II activin receptors while excluding type I receptor. In Ovis aries (Sheep), this protein is Inhibin beta A chain (INHBA).